The chain runs to 573 residues: PCNA-interacting partner (573 aa).

The interval 492–532 (TGGQVKNKPCKNVANKRSKRKQVDIQSETTNAQENEPPQKK) is disordered. Over residues 515–527 (DIQSETTNAQENE) the composition is skewed to polar residues.

The protein belongs to the PARI family.

Its subcellular location is the cytoplasm. It is found in the nucleus. Functionally, required to suppress inappropriate homologous recombination, thereby playing a central role DNA repair and in the maintenance of genomic stability. The polypeptide is PCNA-interacting partner (parpbp) (Xenopus tropicalis (Western clawed frog)).